Reading from the N-terminus, the 239-residue chain is Isopentenyl-diphosphate Delta-isomerase (239 aa).

Lysine 43 contributes to the substrate binding site. Histidine 47 and histidine 58 together coordinate Mg(2+). The Nudix hydrolase domain maps to 56–210 (LLHRAFSIFL…KVKVTPWFRL (155 aa)). The substrate site is built by arginine 77 and lysine 81. Cysteine 93 is an active-site residue. Serine 94 contacts substrate. Glutamate 156 and glutamate 158 together coordinate Mg(2+). Glutamate 158 is an active-site residue.

The protein belongs to the IPP isomerase type 1 family. Mg(2+) serves as cofactor.

The enzyme catalyses isopentenyl diphosphate = dimethylallyl diphosphate. It participates in isoprenoid biosynthesis; dimethylallyl diphosphate biosynthesis; dimethylallyl diphosphate from isopentenyl diphosphate: step 1/1. Its function is as follows. Catalyzes the 1,3-allylic rearrangement of the homoallylic substrate isopentenyl (IPP) to its highly electrophilic allylic isomer, dimethylallyl diphosphate (DMAPP). In Dictyostelium discoideum (Social amoeba), this protein is Isopentenyl-diphosphate Delta-isomerase (ipi).